The chain runs to 87 residues: Small ribosomal subunit protein bS20 (87 aa).

Positions 1-28 (MANSAQARKRARQASAQRDHNMSQRSEL) are disordered. Positions 17–28 (QRDHNMSQRSEL) are enriched in basic and acidic residues.

The protein belongs to the bacterial ribosomal protein bS20 family.

Functionally, binds directly to 16S ribosomal RNA. This Thiobacillus denitrificans (strain ATCC 25259 / T1) protein is Small ribosomal subunit protein bS20.